A 183-amino-acid chain; its full sequence is Inosine/xanthosine triphosphatase (183 aa).

Belongs to the YjjX NTPase family. In terms of assembly, homodimer. The cofactor is Mg(2+). Mn(2+) serves as cofactor.

The enzyme catalyses XTP + H2O = XDP + phosphate + H(+). It catalyses the reaction ITP + H2O = IDP + phosphate + H(+). Functionally, phosphatase that hydrolyzes non-canonical purine nucleotides such as XTP and ITP to their respective diphosphate derivatives. Probably excludes non-canonical purines from DNA/RNA precursor pool, thus preventing their incorporation into DNA/RNA and avoiding chromosomal lesions. The protein is Inosine/xanthosine triphosphatase of Vibrio cholerae serotype O1 (strain ATCC 39315 / El Tor Inaba N16961).